The following is a 219-amino-acid chain: Probable GTP-binding protein EngB (219 aa).

In terms of domain architecture, EngB-type G spans 31–205 (VGVEIAFAGR…LSILNEWCHP (175 aa)). GTP-binding positions include 39–46 (GRSNAGKS), 66–70 (GRTQL), 84–87 (DLPG), 151–154 (TKSD), and 184–186 (FSA). Residues serine 46 and threonine 68 each coordinate Mg(2+).

Belongs to the TRAFAC class TrmE-Era-EngA-EngB-Septin-like GTPase superfamily. EngB GTPase family. The cofactor is Mg(2+).

In terms of biological role, necessary for normal cell division and for the maintenance of normal septation. The protein is Probable GTP-binding protein EngB of Shewanella putrefaciens (strain CN-32 / ATCC BAA-453).